The primary structure comprises 353 residues: N-formyl peptide receptor 3 (353 aa).

The Extracellular segment spans residues 1-27 (METNFSIPLNETEEVLPEPAGHTVLWI). Residues asparagine 4 and asparagine 10 are each glycosylated (N-linked (GlcNAc...) asparagine). The chain crosses the membrane as a helical span at residues 28-50 (FSLLVHGVTFVFGVLGNGLVIWV). At 51–61 (AGFRMTRTVNT) the chain is on the cytoplasmic side. A helical membrane pass occupies residues 62–83 (ICYLNLALADFSFSAILPFRMV). Topologically, residues 84–100 (SVAMREKWPFGSFLCKL) are extracellular. Cysteines 98 and 176 form a disulfide. The chain crosses the membrane as a helical span at residues 101 to 121 (VHVMIDINLFVSVYLITIIAL). Topologically, residues 122-140 (DRCICVLHPAWAQNHRTMS) are cytoplasmic. Residues 141-162 (LAKRVMTGLWIFTIVLTLPNFI) traverse the membrane as a helical segment. The Extracellular segment spans residues 163-205 (FWTTISTTNGDTYCIFNFAFWGDTAVERLNVFITMAKVFLILH). A helical membrane pass occupies residues 206–226 (FIIGFSVPMSIITVCYGIIAA). The Cytoplasmic segment spans residues 227 to 242 (KIHRNHMIKSSRPLRV). The helical transmembrane segment at 243 to 266 (FAAVVASFFICWFPYELIGILMAV) threads the bilayer. At 267-286 (WLKEMLLNGKYKIILVLINP) the chain is on the extracellular side. A helical membrane pass occupies residues 287 to 306 (TSSLAFFNSCLNPILYVFMG). Over 307 to 353 (RNFQERLIRSLPTSLERALTEVPDSAQTSNTDTTSASPPEETELQAM) the chain is Cytoplasmic. Residues 327–353 (EVPDSAQTSNTDTTSASPPEETELQAM) are disordered. A compositionally biased stretch (polar residues) spans 331–343 (SAQTSNTDTTSAS).

This sequence belongs to the G-protein coupled receptor 1 family. In terms of tissue distribution, detected in various tissues with highest expression in lung.

Its subcellular location is the cell membrane. Low affinity receptor for N-formyl-methionyl peptides, which are powerful neutrophils chemotactic factors. Binding of FMLP to the receptor causes activation of neutrophils. This response is mediated via a G-protein that activates a phosphatidylinositol-calcium second messenger system. Acts as a receptor for humanin. This Homo sapiens (Human) protein is N-formyl peptide receptor 3 (FPR3).